The following is a 384-amino-acid chain: Odorant receptor 33c (384 aa).

Over 1 to 35 (MVIIDSLSFYRPFWICMRLLVPTFFKDSSRPVQLY) the chain is Cytoplasmic. Residues 36 to 56 (VVLLHILVTLWFPLHLLLHLL) traverse the membrane as a helical segment. Over 57-63 (LLPSTAE) the chain is Extracellular. Residues 64–84 (FFKNLTMSLTCVACSLKHVAH) form a helical membrane-spanning segment. The Cytoplasmic portion of the chain corresponds to 85–128 (LYHLPQIVEIESLIEQLDTFIASEQEHRYYRDHVHCHARRFTRC). The helical transmembrane segment at 129 to 149 (LYISFGMIYALFLFGVFVQVI) threads the bilayer. Residues 150–169 (SGNWELLYPAYFPFDLESNR) lie on the Extracellular side of the membrane. A helical membrane pass occupies residues 170 to 190 (FLGAVALGYQVFSMLVEGFQG). The Cytoplasmic portion of the chain corresponds to 191–251 (LGNDTYTPLT…LVRFHNLVSR (61 aa)). The chain crosses the membrane as a helical span at residues 252–272 (TISEVQLVQLGGCGATLCIIV). The Extracellular segment spans residues 273 to 274 (SY). Residues 275–295 (MLFFVGDTISLVYYLVFFGVV) form a helical membrane-spanning segment. Over 296–358 (CVQLFPSCYF…WIIKAGGLIE (63 aa)) the chain is Cytoplasmic. The helical transmembrane segment at 359–379 (LNLNAFFATLKMAYSLFAVVV) threads the bilayer. The Extracellular segment spans residues 380 to 384 (RAKGI).

It belongs to the insect chemoreceptor superfamily. Heteromeric odorant receptor channel (TC 1.A.69) family. Or2a subfamily. In terms of assembly, interacts with Orco. Complexes exist early in the endomembrane system in olfactory sensory neurons (OSNs), coupling these complexes to the conserved ciliary trafficking pathway. Expressed in the antenna and in a subset of 18 olfactory receptor neurons in the maxillary palp.

It is found in the cell membrane. In terms of biological role, odorant receptor which mediates acceptance or avoidance behavior, depending on its substrates. The odorant receptor repertoire encodes a large collection of odor stimuli that vary widely in identity, intensity, and duration. May form a complex with Orco to form odorant-sensing units, providing sensitive and prolonged odorant signaling and calcium permeability. The protein is Odorant receptor 33c (Or33c) of Drosophila melanogaster (Fruit fly).